Here is a 303-residue protein sequence, read N- to C-terminus: Probable cell division protein WhiA (303 aa).

The segment at residues 272-303 is a DNA-binding region (H-T-H motif); sequence SIQQVADALEFPITKSGVNHRLRKINKIADDL.

This sequence belongs to the WhiA family.

In terms of biological role, involved in cell division and chromosome segregation. This chain is Probable cell division protein WhiA, found in Streptococcus pyogenes serotype M6 (strain ATCC BAA-946 / MGAS10394).